Consider the following 171-residue polypeptide: Protein GrpE (171 aa).

Residues 1–20 (MNEEKEESPSTEAEGAGAEV) are disordered.

This sequence belongs to the GrpE family. In terms of assembly, homodimer.

Its subcellular location is the cytoplasm. In terms of biological role, participates actively in the response to hyperosmotic and heat shock by preventing the aggregation of stress-denatured proteins, in association with DnaK and GrpE. It is the nucleotide exchange factor for DnaK and may function as a thermosensor. Unfolded proteins bind initially to DnaJ; upon interaction with the DnaJ-bound protein, DnaK hydrolyzes its bound ATP, resulting in the formation of a stable complex. GrpE releases ADP from DnaK; ATP binding to DnaK triggers the release of the substrate protein, thus completing the reaction cycle. Several rounds of ATP-dependent interactions between DnaJ, DnaK and GrpE are required for fully efficient folding. The sequence is that of Protein GrpE from Acidithiobacillus ferrooxidans (strain ATCC 23270 / DSM 14882 / CIP 104768 / NCIMB 8455) (Ferrobacillus ferrooxidans (strain ATCC 23270)).